The chain runs to 626 residues: Putative L-type lectin-domain containing receptor kinase V.8 (626 aa).

An N-terminal signal peptide occupies residues 1–21; sequence MPSELKVLHIVLVLLYTLSSS. The tract at residues 22-212 is legume-lectin like; that stretch reads TYNSNGNWTL…SIGAFHYMLS (191 aa). At 22 to 245 the chain is on the extracellular side; that stretch reads TYNSNGNWTL…PKKSSDRTKK (224 aa). Residues Asn28, Asn59, Asn112, and Asn162 are each glycosylated (N-linked (GlcNAc...) asparagine). A helical transmembrane segment spans residues 246–266; it reads ILAVCLTLAVFAVFVASGICF. Topologically, residues 267-626 are cytoplasmic; that stretch reads VFYTRHKKVK…LTNSFLSHGR (360 aa). The Protein kinase domain occupies 303–562; that stretch reads FKEKQLLGKG…GLLCAHHTEL (260 aa). ATP-binding positions include 309–317 and Lys332; that span reads LGKGGFGQV. Catalysis depends on Asp429, which acts as the Proton acceptor.

It in the C-terminal section; belongs to the protein kinase superfamily. Ser/Thr protein kinase family. In the N-terminal section; belongs to the leguminous lectin family.

The protein localises to the cell membrane. The catalysed reaction is L-seryl-[protein] + ATP = O-phospho-L-seryl-[protein] + ADP + H(+). It catalyses the reaction L-threonyl-[protein] + ATP = O-phospho-L-threonyl-[protein] + ADP + H(+). The sequence is that of Putative L-type lectin-domain containing receptor kinase V.8 (LECRK58) from Arabidopsis thaliana (Mouse-ear cress).